A 397-amino-acid polypeptide reads, in one-letter code: Cercosporin biosynthesis regulatory protein CTB8 (397 aa).

Residues 26-53 constitute a DNA-binding region (zn(2)-C6 fungal-type); the sequence is CTHCSSQKIRCTKERPACARCVNKGLLC. 2 disordered regions span residues 63–90 and 173–198; these read TRRH…APDS and AEAS…ATTH. Residues 74–87 show a composition bias toward polar residues; sequence PETTISNAPTSSVA. A compositionally biased stretch (low complexity) spans 179–197; the sequence is PSSSSSPPSQRSDGGRATT.

It localises to the nucleus. In terms of biological role, transcription regulator of the gene cluster that mediates the biosynthesis of cercosporin, a light-activated, non-host-selective toxin. The perylenequinone chromophore of cercosporin absorbs light energy to attain an electronically-activated triplet state and produces active oxygen species such as the hydroxyl radical, superoxide, hydrogen peroxide or singlet oxygen upon reaction with oxygen molecules. These reactive oxygen species cause damage to various cellular components including lipids, proteins and nucleic acids. The chain is Cercosporin biosynthesis regulatory protein CTB8 from Cercospora beticola (Sugarbeet leaf spot fungus).